A 158-amino-acid polypeptide reads, in one-letter code: UPF0262 protein RSKD131_1985 (158 aa).

The protein belongs to the UPF0262 family.

The sequence is that of UPF0262 protein RSKD131_1985 from Cereibacter sphaeroides (strain KD131 / KCTC 12085) (Rhodobacter sphaeroides).